Reading from the N-terminus, the 264-residue chain is Teichoic acids export ATP-binding protein TagH (264 aa).

The ABC transporter domain occupies 5 to 243; that stretch reads VNIKNVTKEY…YEAFLNDFKK (239 aa). Position 57–64 (57–64) interacts with ATP; that stretch reads GINGSGKS.

The protein belongs to the ABC transporter superfamily. Teichoic acids exporter (TC 3.A.1.104.1) family. In terms of assembly, the complex is composed of two ATP-binding proteins (TagH) and two transmembrane proteins (TagG).

It localises to the cell membrane. It catalyses the reaction ATP + H2O + teichoic acidSide 1 = ADP + phosphate + teichoic acidSide 2.. Functionally, part of the ABC transporter complex TagGH involved in teichoic acids export. Responsible for energy coupling to the transport system. The chain is Teichoic acids export ATP-binding protein TagH from Staphylococcus aureus (strain Mu50 / ATCC 700699).